The chain runs to 418 residues: Serum response factor homolog A (418 aa).

Disordered regions lie at residues 14–67 (LGNV…GKKA), 144–170 (CLNT…LLQQ), 301–351 (RLGK…NNNS), and 388–418 (SSSS…FPPC). Low complexity-rich tracts occupy residues 22–39 (PSSP…PTST) and 51–61 (TSEPSSPSTGE). Positions 67-127 (AGRRKIKIEF…GHVYTFATAK (61 aa)) constitute an MADS-box domain. 3 stretches are compositionally biased toward low complexity: residues 150–170 (NPNS…LLQQ), 306–351 (NNNN…NNNS), and 388–399 (SSSSASSSPASP). The span at 400–418 (NQFNYSNHSMPLNNQFPPC) shows a compositional bias: polar residues.

It is found in the nucleus. Required for proper slug migration, spore differentiation and stalk differentiation (under nonbuffered conditions). Could be involved in late events of spore maturation necessary for spore stability. The protein is Serum response factor homolog A (srfA) of Dictyostelium discoideum (Social amoeba).